The sequence spans 238 residues: MAEVNGDFPVPSFADGTGSVSAGLDLLVERSIHEARSTEPDASTQLTIIFGGSCRVFNGVPAQKVQEIIRIAFAGKQTKNVTGINPALNRALSFSTVADLPIARRRSLQRFLEKRRDRSTKPDGSMILPSQLTIIFGGSFSVFDGIPAEKVQEILHIAAAAKATETINLTSINPALKRAISFSNASTVACVSTADVPIARRRSLQRFFEKRRHRFVHTKPYSATTSEADKNETSPIVT.

The Tify 1 domain occupies 39-74; the sequence is EPDASTQLTIIFGGSCRVFNGVPAQKVQEIIRIAFA. Positions 101–120 match the Jas 1 motif; the sequence is PIARRRSLQRFLEKRRDRST. A Nuclear localization signal 1 motif is present at residues 103–110; sequence ARRRSLQR. A Tify 2 domain is found at 125–160; sequence SMILPSQLTIIFGGSFSVFDGIPAEKVQEILHIAAA. A Jas 2 motif is present at residues 197–222; that stretch reads PIARRRSLQRFFEKRRHRFVHTKPYS. The Nuclear localization signal 2 signature appears at 199 to 206; the sequence is ARRRSLQR. A disordered region spans residues 219 to 238; the sequence is KPYSATTSEADKNETSPIVT.

This sequence belongs to the TIFY/JAZ family. As to quaternary structure, interacts with MYC2, MYB21, MYB24, AFPH2/NINJA, TIFY10A/JAZ1, TIFY10B/JAZ2, TIFY6B/JAZ3, TIFY6A/JAZ4, TIFY7/JAZ9 and TIFY9/JAZ10. In terms of processing, ubiquitinated. Targeted for degradation by the SCF(COI1) E3 ubiquitin ligase-proteasome pathway during jasmonate signaling.

It localises to the nucleus. Repressor of jasmonate (JA) responses. Targets MYC2, MYC3 and MYC4 that are JA-dependent transcription activators. The protein is Protein TIFY 3A (TIFY3A) of Arabidopsis thaliana (Mouse-ear cress).